The primary structure comprises 310 residues: E3 ubiquitin-protein ligase CSU1 (310 aa).

The segment at 43-67 (CSLCLKPFIDPMCCHKGHVFCRECI) adopts an RING-type 1; degenerate zinc-finger fold. Positions 75–95 (KKDIQRRLAAHSSQKKQDKDE) form a coiled coil. Residues 110-138 (EFDQQNHSAMPRNSDKNHNEDKNGFHGAN) form a disordered region. Basic and acidic residues predominate over residues 122–133 (NSDKNHNEDKNG). An RING-type 2 zinc finger spans residues 221–263 (CPSCKVTLTNTMSLVALSSCGHVFCKKCAEKFMPVDKVCLVCD).

The protein belongs to the NOSIP family.

It is found in the nucleus. Its subcellular location is the nucleus speckle. It carries out the reaction S-ubiquitinyl-[E2 ubiquitin-conjugating enzyme]-L-cysteine + [acceptor protein]-L-lysine = [E2 ubiquitin-conjugating enzyme]-L-cysteine + N(6)-ubiquitinyl-[acceptor protein]-L-lysine.. The protein operates within protein modification; protein ubiquitination. Its function is as follows. RING-finger E3 ubiquitin-protein ligase that plays an major role in maintaining COP1 homeostasis in darkness. Negatively regulates COP1 protein accumulation by targeting COP1 for ubiquitination and subsequent proteasomal degradation in dark-grown seedlings. Negatively regulates the accumulation of SPA1 protein in the dark. This Arabidopsis thaliana (Mouse-ear cress) protein is E3 ubiquitin-protein ligase CSU1.